A 318-amino-acid polypeptide reads, in one-letter code: Small ribosomal subunit biogenesis GTPase RsgA (318 aa).

The segment covering 1 to 16 (MTRGKPGRAGHDRRHA) has biased composition (basic residues). A disordered region spans residues 1-21 (MTRGKPGRAGHDRRHASTGEH). The CP-type G domain maps to 84-249 (SDQFKSKQLA…LIDSPGFQEF (166 aa)). Residues 133-136 (NKID) and 187-195 (GQSGMGKSS) each bind GTP. Positions 273, 278, 280, and 286 each coordinate Zn(2+).

This sequence belongs to the TRAFAC class YlqF/YawG GTPase family. RsgA subfamily. Monomer. Associates with 30S ribosomal subunit, binds 16S rRNA. Zn(2+) is required as a cofactor.

The protein resides in the cytoplasm. In terms of biological role, one of several proteins that assist in the late maturation steps of the functional core of the 30S ribosomal subunit. Helps release RbfA from mature subunits. May play a role in the assembly of ribosomal proteins into the subunit. Circularly permuted GTPase that catalyzes slow GTP hydrolysis, GTPase activity is stimulated by the 30S ribosomal subunit. The protein is Small ribosomal subunit biogenesis GTPase RsgA of Ralstonia nicotianae (strain ATCC BAA-1114 / GMI1000) (Ralstonia solanacearum).